A 307-amino-acid polypeptide reads, in one-letter code: 2-phospho-L-lactate transferase (307 aa).

7,8-didemethyl-8-hydroxy-5-deazariboflavin-binding residues include aspartate 48 and lysine 87.

Belongs to the CofD family. In terms of assembly, homodimer. Mg(2+) serves as cofactor.

The enzyme catalyses (2S)-lactyl-2-diphospho-5'-guanosine + 7,8-didemethyl-8-hydroxy-5-deazariboflavin = oxidized coenzyme F420-0 + GMP + H(+). The protein operates within cofactor biosynthesis; coenzyme F420 biosynthesis. Its function is as follows. Catalyzes the transfer of the 2-phospholactate moiety from (2S)-lactyl-2-diphospho-5'-guanosine to 7,8-didemethyl-8-hydroxy-5-deazariboflavin (FO) with the formation of oxidized coenzyme F420-0 and GMP. This is 2-phospho-L-lactate transferase from Methanosarcina acetivorans (strain ATCC 35395 / DSM 2834 / JCM 12185 / C2A).